Reading from the N-terminus, the 327-residue chain is Probable cell division protein WhiA (327 aa).

A DNA-binding region (H-T-H motif) is located at residues 275 to 308 (SLEELGRLADPPMTKDAVAGRIRRLLSMADRKAK).

Belongs to the WhiA family.

Involved in cell division and chromosome segregation. This Mycobacterium leprae (strain Br4923) protein is Probable cell division protein WhiA.